We begin with the raw amino-acid sequence, 363 residues long: NAD(P)H-quinone oxidoreductase subunit 1, chloroplastic (363 aa).

A run of 7 helical transmembrane segments spans residues 28–48, 98–118, 129–149, 253–273, 274–294, 300–320, and 336–356; these read WVLA…LVIV, FSIG…VIPF, IGIF…LMSG, FGLF…FVTV, LYLG…LVEI, IFGT…FLFI, and LLNL…LLTT.

The protein belongs to the complex I subunit 1 family. In terms of assembly, NDH is composed of at least 16 different subunits, 5 of which are encoded in the nucleus.

The protein localises to the plastid. Its subcellular location is the chloroplast thylakoid membrane. It catalyses the reaction a plastoquinone + NADH + (n+1) H(+)(in) = a plastoquinol + NAD(+) + n H(+)(out). It carries out the reaction a plastoquinone + NADPH + (n+1) H(+)(in) = a plastoquinol + NADP(+) + n H(+)(out). NDH shuttles electrons from NAD(P)H:plastoquinone, via FMN and iron-sulfur (Fe-S) centers, to quinones in the photosynthetic chain and possibly in a chloroplast respiratory chain. The immediate electron acceptor for the enzyme in this species is believed to be plastoquinone. Couples the redox reaction to proton translocation, and thus conserves the redox energy in a proton gradient. The protein is NAD(P)H-quinone oxidoreductase subunit 1, chloroplastic of Citrus sinensis (Sweet orange).